The following is a 201-amino-acid chain: FMN reductase (NADH) RutF 1 (201 aa).

Residues 167–195 (PRAPRSGSAPAEPARAARAVGARPAEGPA) show a composition bias toward low complexity. Residues 167-201 (PRAPRSGSAPAEPARAARAVGARPAEGPALALRSA) form a disordered region.

The protein belongs to the non-flavoprotein flavin reductase family. RutF subfamily.

It catalyses the reaction FMNH2 + NAD(+) = FMN + NADH + 2 H(+). Catalyzes the reduction of FMN to FMNH2 which is used to reduce pyrimidine by RutA via the Rut pathway. This chain is FMN reductase (NADH) RutF 1, found in Methylorubrum extorquens (strain CM4 / NCIMB 13688) (Methylobacterium extorquens).